A 110-amino-acid polypeptide reads, in one-letter code: VIGDEDTVTGFLLGGIGELNKNRKPNFLVVEKETSVTEIEETFRSFLNRDDIGIILINQFIAEMIRHVIDTHTISIPAVLEIPSKEHPYDATKDSILRRAKGMFTMEDLR.

The protein belongs to the V-ATPase F subunit family. As to quaternary structure, V-ATPase is a heteromultimeric enzyme made up of two complexes: the ATP-hydrolytic V1 complex and the proton translocation V0 complex. The V1 complex consists of three catalytic AB heterodimers that form a heterohexamer, three peripheral stalks each consisting of EG heterodimers, one central rotor including subunits D and F, and the regulatory subunits C and H. The proton translocation complex V0 consists of the proton transport subunit a, a ring of proteolipid subunits c9c'', rotary subunit d, subunits e and f, and two accessory subunits.

In terms of biological role, subunit of the V1 complex of vacuolar(H+)-ATPase (V-ATPase), a multisubunit enzyme composed of a peripheral complex (V1) that hydrolyzes ATP and a membrane integral complex (V0) that translocates protons. V-ATPase is responsible for acidifying and maintaining the pH of intracellular compartments and in some cell types, is targeted to the plasma membrane, where it is responsible for acidifying the extracellular environment. This chain is V-type proton ATPase subunit F (atp6s14), found in Xenopus laevis (African clawed frog).